A 197-amino-acid polypeptide reads, in one-letter code: UDP-N-acetylglucosamine transferase subunit alg13 (197 aa).

The segment at 174 to 197 (VRGPDQKNQPTLEQVMSDEMGFVD) is disordered.

Belongs to the glycosyltransferase 28 family. As to quaternary structure, heterodimer with alg14 to form a functional enzyme.

It is found in the endoplasmic reticulum. It carries out the reaction an N-acetyl-alpha-D-glucosaminyl-diphospho-di-trans,poly-cis-dolichol + UDP-N-acetyl-alpha-D-glucosamine = an N,N'-diacetylchitobiosyl-diphospho-di-trans,poly-cis-dolichol + UDP + H(+). Involved in protein N-glycosylation. Essential for the second step of the dolichol-linked oligosaccharide pathway. The sequence is that of UDP-N-acetylglucosamine transferase subunit alg13 (alg13) from Aspergillus fumigatus (strain ATCC MYA-4609 / CBS 101355 / FGSC A1100 / Af293) (Neosartorya fumigata).